Consider the following 505-residue polypeptide: Methylmalonyl-CoA carboxyltransferase 5S subunit (505 aa).

The Pyruvate carboxyltransferase domain occupies 14 to 276; that stretch reads VGITELVLRD…TTNLDYDRLH (263 aa). Substrate-binding positions include 22–26, Ala-59, and Lys-184; that span reads RDAHQ. Asp-23 serves as a coordination point for Co(2+). Residues Lys-184, His-215, and His-217 each coordinate Co(2+). Lys-184 carries the post-translational modification N6-carboxylysine; partial.

In terms of assembly, homodimer. Transcarboxylase is composed of three subunits: 1.3S, 5S, and 12S. The core of the enzyme is composed of six 12S subunits. On each side of the core there are three pairs of 5S subunits. Each 5S dimer is attached to the core by two 1.3S subunits. Thus the total number of chains is 30 (6 + 12 + 12). Co(2+) serves as cofactor. Lys-184 is carboxylated in the free enzyme and helps to coordinate the cobalt ion. Lys-184 is partially carboxylated in the complex with pyruvate, but is not carboxylated in the oxaloacetate-bound form.

The enzyme catalyses (S)-methylmalonyl-CoA + pyruvate = propanoyl-CoA + oxaloacetate. In terms of biological role, the 5S subunit specifically catalyzes the transfer of the carboxyl group from biotin of the 1.3S subunit to pyruvate to form oxaloacetate and 1.3S biotin. This is Methylmalonyl-CoA carboxyltransferase 5S subunit from Propionibacterium freudenreichii subsp. shermanii.